A 343-amino-acid polypeptide reads, in one-letter code: Small ribosomal subunit biogenesis GTPase RsgA (343 aa).

A CP-type G domain is found at 116-275; that stretch reads RGQLKPVAAN…LIDSPGIREF (160 aa). GTP-binding positions include 163-166 and 217-225; these read NKAD and GQSGVGKSS. 4 residues coordinate Zn(2+): Cys299, Cys304, His306, and Cys312.

Belongs to the TRAFAC class YlqF/YawG GTPase family. RsgA subfamily. As to quaternary structure, monomer. Associates with 30S ribosomal subunit, binds 16S rRNA. It depends on Zn(2+) as a cofactor.

It is found in the cytoplasm. Functionally, one of several proteins that assist in the late maturation steps of the functional core of the 30S ribosomal subunit. Helps release RbfA from mature subunits. May play a role in the assembly of ribosomal proteins into the subunit. Circularly permuted GTPase that catalyzes slow GTP hydrolysis, GTPase activity is stimulated by the 30S ribosomal subunit. This is Small ribosomal subunit biogenesis GTPase RsgA from Pseudomonas syringae pv. syringae (strain B728a).